The sequence spans 643 residues: Extracellular metalloproteinase 4 (643 aa).

Residues 1–18 (MHGLMLAGLLALPLSVLG) form the signal peptide. The propeptide occupies 19–254 (HPTESHSSGI…VHSVVDYVSA (236 aa)). Over residues 47–57 (TKSDAVPKQDG) the composition is skewed to basic and acidic residues. Residues 47 to 73 (TKSDAVPKQDGESFTTSSTGNDNSSSG) form a disordered region. Low complexity predominate over residues 61 to 73 (TTSSTGNDNSSSG). N-linked (GlcNAc...) asparagine glycans are attached at residues Asn271 and Asn420. His437 is a binding site for Zn(2+). Residue Glu438 is part of the active site. His441 serves as a coordination point for Zn(2+). N-linked (GlcNAc...) asparagine glycans are attached at residues Asn603 and Asn629.

It belongs to the peptidase M36 family. The cofactor is Zn(2+).

Its subcellular location is the secreted. Its function is as follows. Secreted metalloproteinase probably acting as a virulence factor. The sequence is that of Extracellular metalloproteinase 4 (MEP4) from Trichophyton rubrum (Athlete's foot fungus).